The chain runs to 341 residues: UDP-3-O-(3-hydroxymyristoyl)glucosamine N-acyltransferase (341 aa).

Histidine 239 acts as the Proton acceptor in catalysis.

The protein belongs to the transferase hexapeptide repeat family. LpxD subfamily. Homotrimer.

The enzyme catalyses a UDP-3-O-[(3R)-3-hydroxyacyl]-alpha-D-glucosamine + a (3R)-hydroxyacyl-[ACP] = a UDP-2-N,3-O-bis[(3R)-3-hydroxyacyl]-alpha-D-glucosamine + holo-[ACP] + H(+). It carries out the reaction UDP-3-O-[(3R)-3-hydroxytetradecanoyl]-alpha-D-glucosamine + (3R)-hydroxytetradecanoyl-[ACP] = UDP-2-N,3-O-bis[(3R)-3-hydroxytetradecanoyl]-alpha-D-glucosamine + holo-[ACP] + H(+). It participates in glycolipid biosynthesis; lipid IV(A) biosynthesis; lipid IV(A) from (3R)-3-hydroxytetradecanoyl-[acyl-carrier-protein] and UDP-N-acetyl-alpha-D-glucosamine: step 3/6. Its function is as follows. Catalyzes the N-acylation of UDP-3-O-(hydroxytetradecanoyl)glucosamine using 3-hydroxytetradecanoyl-ACP as the acyl donor. Is involved in the biosynthesis of lipid A, a phosphorylated glycolipid that anchors the lipopolysaccharide to the outer membrane of the cell. This chain is UDP-3-O-(3-hydroxymyristoyl)glucosamine N-acyltransferase, found in Escherichia coli O157:H7.